The primary structure comprises 101 residues: Protein Tat (101 aa).

Residues 1–10 are compositionally biased toward basic and acidic residues; that stretch reads MEPVDPRLEP. The disordered stretch occupies residues 1 to 20; that stretch reads MEPVDPRLEPWNHPGSQPKT. Residues 1 to 24 form an interaction with human CREBBP region; sequence MEPVDPRLEPWNHPGSQPKTACNN. Residues 1–48 form a transactivation region; that stretch reads MEPVDPRLEPWNHPGSQPKTACNNCYCKRCCYHCLYCFTKKGLGISYG. Zn(2+) contacts are provided by cysteine 22, cysteine 25, and cysteine 27. Residues 22-37 form a cysteine-rich region; sequence CNNCYCKRCCYHCLYC. Lysine 28 is subject to N6-acetyllysine; by host PCAF. Cysteine 30, histidine 33, cysteine 34, and cysteine 37 together coordinate Zn(2+). A core region spans residues 38-48; that stretch reads FTKKGLGISYG. Residues 48 to 58 show a composition bias toward basic residues; that stretch reads GRKKRSQRRRT. Positions 48–101 are disordered; that stretch reads GRKKRSQRRRTPQSSKSHQDLIPEQPLSQQQGDQTGQKKQKEALESKTEADPCD. The Nuclear localization signal, RNA-binding (TAR), and protein transduction motif lies at 49-57; it reads RKKRSQRRR. Positions 49–86 are interaction with the host capping enzyme RNGTT; that stretch reads RKKRSQRRRTPQSSKSHQDLIPEQPLSQQQGDQTGQKK. Lysine 50 and lysine 51 each carry N6-acetyllysine; by host EP300 and GCN5L2. The residue at position 52 (arginine 52) is an Asymmetric dimethylarginine; by host PRMT6. Residues 86–101 show a composition bias toward basic and acidic residues; the sequence is KQKEALESKTEADPCD.

It belongs to the lentiviruses Tat family. As to quaternary structure, interacts with host CCNT1. Associates with the P-TEFb complex composed at least of Tat, P-TEFb (CDK9 and CCNT1), TAR RNA, RNA Pol II. Recruits the HATs CREBBP, TAF1/TFIID, EP300, PCAF and GCN5L2. Interacts with host KAT5/Tip60; this interaction targets the latter to degradation. Interacts with the host deacetylase SIRT1. Interacts with host capping enzyme RNGTT; this interaction stimulates RNGTT. Binds to host KDR, and to the host integrins ITGAV/ITGB3 and ITGA5/ITGB1. Interacts with host KPNB1/importin beta-1 without previous binding to KPNA1/importin alpha-1. Interacts with EIF2AK2. Interacts with host nucleosome assembly protein NAP1L1; this interaction may be required for the transport of Tat within the nucleus, since the two proteins interact at the nuclear rim. Interacts with host C1QBP/SF2P32; this interaction involves lysine-acetylated Tat. Interacts with the host chemokine receptors CCR2, CCR3 and CXCR4. Interacts with host DPP4/CD26; this interaction may trigger an anti-proliferative effect. Interacts with host LDLR. Interacts with the host extracellular matrix metalloproteinase MMP1. Interacts with host PRMT6; this interaction mediates Tat's methylation. Interacts with, and is ubiquitinated by MDM2/Hdm2. Interacts with host PSMC3 and HTATIP2. Interacts with STAB1; this interaction may overcome SATB1-mediated repression of IL2 and IL2RA (interleukin) in T cells by binding to the same domain than HDAC1. Interacts (when acetylated) with human CDK13, thereby increasing HIV-1 mRNA splicing and promoting the production of the doubly spliced HIV-1 protein Nef. Interacts with host TBP; this interaction modulates the activity of transcriptional pre-initiation complex. Interacts with host RELA. Interacts with host PLSCR1; this interaction negatively regulates Tat transactivation activity by altering its subcellular distribution. In terms of processing, asymmetrical arginine methylation by host PRMT6 seems to diminish the transactivation capacity of Tat and affects the interaction with host CCNT1. Acetylation by EP300, CREBBP, GCN5L2/GCN5 and PCAF regulates the transactivation activity of Tat. EP300-mediated acetylation of Lys-50 promotes dissociation of Tat from the TAR RNA through the competitive binding to PCAF's bromodomain. In addition, the non-acetylated Tat's N-terminus can also interact with PCAF. PCAF-mediated acetylation of Lys-28 enhances Tat's binding to CCNT1. Lys-50 is deacetylated by SIRT1. Post-translationally, polyubiquitination by host MDM2 does not target Tat to degradation, but activates its transactivation function and fosters interaction with CCNT1 and TAR RNA. In terms of processing, phosphorylated by EIF2AK2 on serine and threonine residues adjacent to the basic region important for TAR RNA binding and function. Phosphorylation of Tat by EIF2AK2 is dependent on the prior activation of EIF2AK2 by dsRNA.

It is found in the host nucleus. It localises to the host nucleolus. Its subcellular location is the host cytoplasm. The protein resides in the secreted. Functionally, transcriptional activator that increases RNA Pol II processivity, thereby increasing the level of full-length viral transcripts. Recognizes a hairpin structure at the 5'-LTR of the nascent viral mRNAs referred to as the transactivation responsive RNA element (TAR) and recruits the cyclin T1-CDK9 complex (P-TEFb complex) that will in turn hyperphosphorylate the RNA polymerase II to allow efficient elongation. The CDK9 component of P-TEFb and other Tat-activated kinases hyperphosphorylate the C-terminus of RNA Pol II that becomes stabilized and much more processive. Other factors such as HTATSF1/Tat-SF1, SUPT5H/SPT5, and HTATIP2 are also important for Tat's function. Besides its effect on RNA Pol II processivity, Tat induces chromatin remodeling of proviral genes by recruiting the histone acetyltransferases (HATs) CREBBP, EP300 and PCAF to the chromatin. This also contributes to the increase in proviral transcription rate, especially when the provirus integrates in transcriptionally silent region of the host genome. To ensure maximal activation of the LTR, Tat mediates nuclear translocation of NF-kappa-B by interacting with host RELA. Through its interaction with host TBP, Tat may also modulate transcription initiation. Tat can reactivate a latently infected cell by penetrating in it and transactivating its LTR promoter. In the cytoplasm, Tat is thought to act as a translational activator of HIV-1 mRNAs. Extracellular circulating Tat can be endocytosed by surrounding uninfected cells via the binding to several surface receptors such as CD26, CXCR4, heparan sulfate proteoglycans (HSPG) or LDLR. Neurons are rarely infected, but they internalize Tat via their LDLR. Through its interaction with nuclear HATs, Tat is potentially able to control the acetylation-dependent cellular gene expression. Modulates the expression of many cellular genes involved in cell survival, proliferation or in coding for cytokines or cytokine receptors. Tat plays a role in T-cell and neurons apoptosis. Tat induced neurotoxicity and apoptosis probably contribute to neuroAIDS. Circulating Tat also acts as a chemokine-like and/or growth factor-like molecule that binds to specific receptors on the surface of the cells, affecting many cellular pathways. In the vascular system, Tat binds to ITGAV/ITGB3 and ITGA5/ITGB1 integrins dimers at the surface of endothelial cells and competes with bFGF for heparin-binding sites, leading to an excess of soluble bFGF. The protein is Protein Tat of Homo sapiens (Human).